We begin with the raw amino-acid sequence, 581 residues long: Bestrophin-1 (581 aa).

Topologically, residues 1–31 (MTVTYSSQVANARLGSFSRLLLCWRGSIYKL) are cytoplasmic. Position 10 (alanine 10) interacts with Ca(2+). A helical transmembrane segment spans residues 32 to 51 (LYGEFLIFLLCYYIIRFIYR). At 52-60 (MALTDEQQV) the chain is on the extracellular side. The helical transmembrane segment at 61 to 82 (IFEKLTLYCDSYIQLIPISFVL) threads the bilayer. Residues 83 to 237 (GFYVTLVVTR…DWISVPLVYT (155 aa)) lie on the Cytoplasmic side of the membrane. A helical membrane pass occupies residues 238 to 255 (QVVTVAVYSFFLACLVGR). Topologically, residues 256–274 (QFLNPAKAYPGHEMDLVVP) are extracellular. A helical transmembrane segment spans residues 275–288 (LFTFLQFFFYAGWL). Residues 289–581 (KVAEQLINPF…ALENRDEAHS (293 aa)) lie on the Cytoplasmic side of the membrane. Glutamine 293, asparagine 296, aspartate 301, and aspartate 304 together coordinate Ca(2+). The interval 416 to 440 (EGHFHEGHPKNLRGARLDSSDQEDS) is disordered.

It belongs to the anion channel-forming bestrophin (TC 1.A.46) family. Calcium-sensitive chloride channel subfamily. In terms of assembly, interacts with YWHAG; this interaction promotes the ligand-gated L-glutamate channel activity leading to the positive regulation of NMDA glutamate receptor activity through the L-glutamate secretion. Phosphorylated (in vitro). Post-translationally, dephosphorylated (in vitro) by PP2A.

It localises to the cell membrane. The protein localises to the basolateral cell membrane. The enzyme catalyses chloride(in) = chloride(out). The catalysed reaction is hydrogencarbonate(in) = hydrogencarbonate(out). It catalyses the reaction 4-aminobutanoate(in) = 4-aminobutanoate(out). It carries out the reaction L-glutamate(out) = L-glutamate(in). In terms of biological role, ligand-gated anion channel that allows the movement of anions across cell membranes when activated by calcium (Ca2+). Allows the movement of chloride and hydrogencarbonate. Found in a partially open conformation leading to significantly smaller chloride movement. Upon F2R/PAR-1 activation, the sequestered calcium is released into the cytosol of astrocytes, leading to the (Ca2+)-dependent release of L-glutamate into the synaptic cleft that targets the neuronal postsynaptic GRIN2A/NMDAR receptor resulting in the synaptic plasticity regulation. Upon activation of the norepinephrine-alpha-1 adrenergic receptor signaling pathway, transports as well D-serine than L-glutamate in a (Ca2+)-dependent manner, leading to activation of adjacent NMDAR receptors and therefore regulates the heterosynaptic long-term depression and metaplasticity during initial memory acquisition. Releases the 4-aminobutanoate neurotransmitter in a (Ca2+)-dependent manner, and participates in its tonic release from cerebellar glial cells. In Sus scrofa (Pig), this protein is Bestrophin-1.